Here is a 452-residue protein sequence, read N- to C-terminus: Trigger factor (452 aa).

The 86-residue stretch at 171–256 (GDRVTVSFKG…ATKLEAPQET (86 aa)) folds into the PPIase FKBP-type domain.

The protein belongs to the FKBP-type PPIase family. Tig subfamily.

It is found in the cytoplasm. The enzyme catalyses [protein]-peptidylproline (omega=180) = [protein]-peptidylproline (omega=0). Involved in protein export. Acts as a chaperone by maintaining the newly synthesized protein in an open conformation. Functions as a peptidyl-prolyl cis-trans isomerase. In Rhodopseudomonas palustris (strain ATCC BAA-98 / CGA009), this protein is Trigger factor.